The chain runs to 460 residues: Homocitrate synthase (460 aa).

Residues 3–258 (VGILDSTLRE…IEVVKLNKLQ (256 aa)) form the Pyruvate carboxyltransferase domain. Arg11 is a binding site for 2-oxoglutarate. Glu12 contacts Mg(2+). Positions 75, 135, and 169 each coordinate 2-oxoglutarate. The Mg(2+) site is built by His197 and His199. Residue His291 is the Proton acceptor of the active site.

The protein belongs to the alpha-IPM synthase/homocitrate synthase family. Homocitrate synthase LYS20/LYS21 subfamily. In terms of assembly, forms a homotetramer in the absence of lysine, and is in hexadecamer-octamer equilibrium in the presence of lysine. It depends on Mg(2+) as a cofactor. Requires Mn(2+) as cofactor.

The enzyme catalyses acetyl-CoA + 2-oxoglutarate + H2O = (2R)-homocitrate + CoA + H(+). The protein operates within amino-acid biosynthesis; L-lysine biosynthesis via AAA pathway; L-alpha-aminoadipate from 2-oxoglutarate: step 1/5. With respect to regulation, inhibited by lysine. Its function is as follows. Catalyzes the aldol-type condensation of 2-oxoglutarate with acetyl-CoA to yield homocitrate. Carries out the first step of the alpha-aminoadipate (AAA) lysine biosynthesis pathway. This chain is Homocitrate synthase, found in Sulfurisphaera tokodaii (strain DSM 16993 / JCM 10545 / NBRC 100140 / 7) (Sulfolobus tokodaii).